The sequence spans 144 residues: Maximins 1/H1 (144 aa).

Residues 1–18 form the signal peptide; that stretch reads MNFKYIVAVSFLLASAYA. A propeptide spanning residues 19–43 is cleaved from the precursor; sequence RSEENDEQSLSQRDVLEEESLREIR. Asparagine 70 is modified (asparagine amide). A propeptide spanning residues 74-123 is cleaved from the precursor; it reads TAEEHEVMKRLEAVMRDLDSLDYPEEAAERETRSFNQEEIANLFTKKEKR. Position 143 is a leucine amide (leucine 143).

It belongs to the bombinin family. Expressed by the skin glands.

It is found in the secreted. Antibacterial peptide with amphipathic alpha-helical structure that has activity against both Gram-positive and Gram-negative bacteria. Also shows antimicrobial activity against the fungus C.albicans, but not against A.flavus nor P.uticale. It has little hemolytic activity. It possess a significant cytotoxicity against tumor cell lines, but does not possess a significant anti-HIV activity. Also shows high spermicidal activity. Functionally, antibacterial peptide with activity against both Gram-positive and Gram-negative bacteria. Also shows antimicrobial activity against the fungus C.albicans. In addition, shows strong hemolytic activity. The sequence is that of Maximins 1/H1 from Bombina maxima (Giant fire-bellied toad).